Here is an 898-residue protein sequence, read N- to C-terminus: Alanine--tRNA ligase (898 aa).

The Zn(2+) site is built by His564, His568, Cys682, and His686.

This sequence belongs to the class-II aminoacyl-tRNA synthetase family. Requires Zn(2+) as cofactor.

The protein localises to the cytoplasm. The catalysed reaction is tRNA(Ala) + L-alanine + ATP = L-alanyl-tRNA(Ala) + AMP + diphosphate. In terms of biological role, catalyzes the attachment of alanine to tRNA(Ala) in a two-step reaction: alanine is first activated by ATP to form Ala-AMP and then transferred to the acceptor end of tRNA(Ala). Also edits incorrectly charged Ser-tRNA(Ala) and Gly-tRNA(Ala) via its editing domain. The polypeptide is Alanine--tRNA ligase (Beijerinckia indica subsp. indica (strain ATCC 9039 / DSM 1715 / NCIMB 8712)).